The primary structure comprises 876 residues: DNA mismatch repair protein MutS (876 aa).

Gly-626–Ser-633 contacts ATP. The interval Phe-829–Pro-856 is disordered. Residues Ala-832 to Pro-841 show a composition bias toward pro residues.

The protein belongs to the DNA mismatch repair MutS family.

This protein is involved in the repair of mismatches in DNA. It is possible that it carries out the mismatch recognition step. This protein has a weak ATPase activity. The chain is DNA mismatch repair protein MutS from Cereibacter sphaeroides (strain ATCC 17025 / ATH 2.4.3) (Rhodobacter sphaeroides).